The chain runs to 334 residues: Holliday junction branch migration complex subunit RuvB (334 aa).

Residues 4-184 (ADRLISAEPI…FGIVQRLEFY (181 aa)) are large ATPase domain (RuvB-L). ATP contacts are provided by residues Ile-23, Arg-24, Gly-65, Lys-68, Thr-69, Thr-70, 131–133 (EDY), Arg-174, Tyr-184, and Arg-221. Thr-69 lines the Mg(2+) pocket. The tract at residues 185-255 (QVADLQHIVS…VAMQALDMLN (71 aa)) is small ATPAse domain (RuvB-S). The segment at 258-334 (AEGFDYMDRK…YKHFGMVREE (77 aa)) is head domain (RuvB-H). The DNA site is built by Arg-294, Arg-313, and Arg-318.

This sequence belongs to the RuvB family. In terms of assembly, homohexamer. Forms an RuvA(8)-RuvB(12)-Holliday junction (HJ) complex. HJ DNA is sandwiched between 2 RuvA tetramers; dsDNA enters through RuvA and exits via RuvB. An RuvB hexamer assembles on each DNA strand where it exits the tetramer. Each RuvB hexamer is contacted by two RuvA subunits (via domain III) on 2 adjacent RuvB subunits; this complex drives branch migration. In the full resolvosome a probable DNA-RuvA(4)-RuvB(12)-RuvC(2) complex forms which resolves the HJ.

Its subcellular location is the cytoplasm. The enzyme catalyses ATP + H2O = ADP + phosphate + H(+). The RuvA-RuvB-RuvC complex processes Holliday junction (HJ) DNA during genetic recombination and DNA repair, while the RuvA-RuvB complex plays an important role in the rescue of blocked DNA replication forks via replication fork reversal (RFR). RuvA specifically binds to HJ cruciform DNA, conferring on it an open structure. The RuvB hexamer acts as an ATP-dependent pump, pulling dsDNA into and through the RuvAB complex. RuvB forms 2 homohexamers on either side of HJ DNA bound by 1 or 2 RuvA tetramers; 4 subunits per hexamer contact DNA at a time. Coordinated motions by a converter formed by DNA-disengaged RuvB subunits stimulates ATP hydrolysis and nucleotide exchange. Immobilization of the converter enables RuvB to convert the ATP-contained energy into a lever motion, pulling 2 nucleotides of DNA out of the RuvA tetramer per ATP hydrolyzed, thus driving DNA branch migration. The RuvB motors rotate together with the DNA substrate, which together with the progressing nucleotide cycle form the mechanistic basis for DNA recombination by continuous HJ branch migration. Branch migration allows RuvC to scan DNA until it finds its consensus sequence, where it cleaves and resolves cruciform DNA. The polypeptide is Holliday junction branch migration complex subunit RuvB (Serratia proteamaculans (strain 568)).